A 577-amino-acid polypeptide reads, in one-letter code: Polyadenylate-binding protein, cytoplasmic and nuclear (577 aa).

The span at 1 to 10 (MADITDKTAE) shows a compositional bias: basic and acidic residues. Positions 1–36 (MADITDKTAEQLENLNIQDDQKQAATGSESQSVENS) are disordered. At Ala2 the chain carries N-acetylalanine. Lys7 participates in a covalent cross-link: Glycyl lysine isopeptide (Lys-Gly) (interchain with G-Cter in ubiquitin). The interval 9–61 (AEQLENLNIQDDQKQAATGSESQSVENSSASLYVGDLEPSVSEAHLYDIFSPI) is required and sufficient for nuclear export. A compositionally biased stretch (polar residues) spans 11–27 (QLENLNIQDDQKQAATG). Residues 12–17 (LENLNI) carry the Nuclear export signal motif. RRM domains lie at 38-116 (ASLY…WSQR), 126-203 (GNIF…PHLS), 219-296 (TNLY…RAQK), and 322-399 (VNLF…IAQR). Arg107 bears the Omega-N-methylarginine mark. At Ser249 the chain carries Phosphoserine. The tract at residues 281 to 317 (DSELNGEKLYVGRAQKKNERMHVLKKQYEAYRLEKMA) is required and sufficient for nuclear import. Ser332 bears the Phosphoserine mark. Residue Lys337 forms a Glycyl lysine isopeptide (Lys-Gly) (interchain with G-Cter in ubiquitin) linkage. Ser405 is modified (phosphoserine). The tract at residues 473 to 577 (PPQFRNGPVY…KEQEQQTEQA (105 aa)) is interaction with SUP35. The region spanning 489-568 (GFPRNANDNN…ASAAYESFKK (80 aa)) is the PABC domain.

This sequence belongs to the polyadenylate-binding protein type-1 family. In terms of assembly, binds to poly(A) mRNA to form a periodic structure with a packing density of one molecule per 25 adenylate residues. Interacts with the nuclear export factor CRM1 and with the importin SXM1. Interacts with RNA15, a component of the cleavage factor IA (CFIA) complex. Interacts with translation initiation factor eIF4G (TIF4631 or TIF4632) and release factor eRF3 (SUP35). Interacts with the PAB-dependent poly(A)-nuclease (PAN) complex regulatory subunit PAN3. Interacts with ARF1, DCP1, PBP1, the Hsp70 chaperone SSA1, and TPA1. Interacts with PAT1 in an RNA-dependent manner.

It localises to the cytoplasm. Its subcellular location is the nucleus. In terms of biological role, binds the poly(A) tail of mRNA. Appears to be an important mediator of the multiple roles of the poly(A) tail in mRNA biogenesis, stability and translation. In the nucleus, interacts with the nuclear cleavage factor IA (CFIA), which is required for both mRNA cleavage and polyadenylation. Is also required for efficient mRNA export to the cytoplasm. Acts in concert with a poly(A)-specific nuclease (PAN) to affect poly(A) tail shortening, which may occur concomitantly with either nucleocytoplasmic mRNA transport or translational initiation. Regulates PAN activity via interaction with the stimulator PAN3 or the inhibitor PBP1. In the cytoplasm, affects both translation and mRNA decay. Stimulates translation by interaction with translation initiation factor eIF4G, a subunit of the cap-binding complex eIF4F, bringing the 5'- and 3'-ends of the mRNA in proximity. The formation of this circular mRNP structure appears to be critical for the synergistic effects of the cap and the poly(A) tail in facilitating translation initiation, recycling of ribosomes, and mRNA stability. Also regulates translation termination by recruiting eukaryotic release factor 3 (eRF3). Interaction with eRF3 is also required for regulation of normal mRNA decay through translation termination-coupled poly(A) shortening, probably mediated by PAN. Loss of PAB1 from the mRNP after deadenylation triggers mRNA degradation. Inhibits the major cytoplasmic mRNA deadenylase CCR4-NOT complex. Is also associated peripherally with COPI vesicles through its interaction with ARF1, and this is required for correct localization of the asymmetrically distributed ASH1 mRNA. The chain is Polyadenylate-binding protein, cytoplasmic and nuclear (PAB1) from Saccharomyces cerevisiae (strain ATCC 204508 / S288c) (Baker's yeast).